A 171-amino-acid polypeptide reads, in one-letter code: Crossover junction endodeoxyribonuclease RuvC (171 aa).

Catalysis depends on residues Asp-7, Glu-67, and Asp-139. Mg(2+) is bound by residues Asp-7, Glu-67, and Asp-139.

Belongs to the RuvC family. As to quaternary structure, homodimer which binds Holliday junction (HJ) DNA. The HJ becomes 2-fold symmetrical on binding to RuvC with unstacked arms; it has a different conformation from HJ DNA in complex with RuvA. In the full resolvosome a probable DNA-RuvA(4)-RuvB(12)-RuvC(2) complex forms which resolves the HJ. Requires Mg(2+) as cofactor.

It localises to the cytoplasm. The catalysed reaction is Endonucleolytic cleavage at a junction such as a reciprocal single-stranded crossover between two homologous DNA duplexes (Holliday junction).. In terms of biological role, the RuvA-RuvB-RuvC complex processes Holliday junction (HJ) DNA during genetic recombination and DNA repair. Endonuclease that resolves HJ intermediates. Cleaves cruciform DNA by making single-stranded nicks across the HJ at symmetrical positions within the homologous arms, yielding a 5'-phosphate and a 3'-hydroxyl group; requires a central core of homology in the junction. The consensus cleavage sequence is 5'-(A/T)TT(C/G)-3'. Cleavage occurs on the 3'-side of the TT dinucleotide at the point of strand exchange. HJ branch migration catalyzed by RuvA-RuvB allows RuvC to scan DNA until it finds its consensus sequence, where it cleaves and resolves the cruciform DNA. In Geotalea uraniireducens (strain Rf4) (Geobacter uraniireducens), this protein is Crossover junction endodeoxyribonuclease RuvC.